The sequence spans 262 residues: Acyl-[acyl-carrier-protein]--UDP-N-acetylglucosamine O-acyltransferase (262 aa).

The protein belongs to the transferase hexapeptide repeat family. LpxA subfamily. In terms of assembly, homotrimer.

It localises to the cytoplasm. It carries out the reaction a (3R)-hydroxyacyl-[ACP] + UDP-N-acetyl-alpha-D-glucosamine = a UDP-3-O-[(3R)-3-hydroxyacyl]-N-acetyl-alpha-D-glucosamine + holo-[ACP]. It participates in glycolipid biosynthesis; lipid IV(A) biosynthesis; lipid IV(A) from (3R)-3-hydroxytetradecanoyl-[acyl-carrier-protein] and UDP-N-acetyl-alpha-D-glucosamine: step 1/6. Involved in the biosynthesis of lipid A, a phosphorylated glycolipid that anchors the lipopolysaccharide to the outer membrane of the cell. This is Acyl-[acyl-carrier-protein]--UDP-N-acetylglucosamine O-acyltransferase from Salmonella arizonae (strain ATCC BAA-731 / CDC346-86 / RSK2980).